A 232-amino-acid polypeptide reads, in one-letter code: Orotidine 5'-phosphate decarboxylase (232 aa).

Residues aspartate 11, lysine 32, 59–68, threonine 116, arginine 178, glutamine 188, glycine 208, and arginine 209 contribute to the substrate site; that span reads DLKLHDIPHT. The Proton donor role is filled by lysine 61.

The protein belongs to the OMP decarboxylase family. Type 1 subfamily. As to quaternary structure, homodimer.

The catalysed reaction is orotidine 5'-phosphate + H(+) = UMP + CO2. The protein operates within pyrimidine metabolism; UMP biosynthesis via de novo pathway; UMP from orotate: step 2/2. In terms of biological role, catalyzes the decarboxylation of orotidine 5'-monophosphate (OMP) to uridine 5'-monophosphate (UMP). The polypeptide is Orotidine 5'-phosphate decarboxylase (Synechococcus sp. (strain JA-3-3Ab) (Cyanobacteria bacterium Yellowstone A-Prime)).